Here is a 360-residue protein sequence, read N- to C-terminus: Peptide chain release factor 1 (360 aa).

Q235 is modified (N5-methylglutamine). Positions 285–295 are enriched in polar residues; that stretch reads AQQASEASTRK. Residues 285–305 are disordered; it reads AQQASEASTRKSLIGSGDRSD.

The protein belongs to the prokaryotic/mitochondrial release factor family. In terms of processing, methylated by PrmC. Methylation increases the termination efficiency of RF1.

The protein localises to the cytoplasm. In terms of biological role, peptide chain release factor 1 directs the termination of translation in response to the peptide chain termination codons UAG and UAA. The protein is Peptide chain release factor 1 of Thiobacillus denitrificans (strain ATCC 25259 / T1).